Here is a 235-residue protein sequence, read N- to C-terminus: Phosphoribosylaminoimidazole-succinocarboxamide synthase (235 aa).

The protein belongs to the SAICAR synthetase family.

It catalyses the reaction 5-amino-1-(5-phospho-D-ribosyl)imidazole-4-carboxylate + L-aspartate + ATP = (2S)-2-[5-amino-1-(5-phospho-beta-D-ribosyl)imidazole-4-carboxamido]succinate + ADP + phosphate + 2 H(+). It participates in purine metabolism; IMP biosynthesis via de novo pathway; 5-amino-1-(5-phospho-D-ribosyl)imidazole-4-carboxamide from 5-amino-1-(5-phospho-D-ribosyl)imidazole-4-carboxylate: step 1/2. The protein is Phosphoribosylaminoimidazole-succinocarboxamide synthase of Streptococcus thermophilus (strain ATCC BAA-250 / LMG 18311).